The primary structure comprises 785 residues: 5-methyltetrahydropteroyltriglutamate--homocysteine methyltransferase (785 aa).

Residues 15–18 and lysine 121 each bind 5-methyltetrahydropteroyltri-L-glutamate; that span reads RELK. L-homocysteine contacts are provided by residues 460-462 and glutamate 513; that span reads IGS. Residues 460-462 and glutamate 513 contribute to the L-methionine site; that span reads IGS. Residues 544–545 and tryptophan 590 each bind 5-methyltetrahydropteroyltri-L-glutamate; that span reads RC. Aspartate 628 is a binding site for L-homocysteine. L-methionine is bound at residue aspartate 628. Position 634 (glutamate 634) interacts with 5-methyltetrahydropteroyltri-L-glutamate. Zn(2+)-binding residues include histidine 670, cysteine 672, and glutamate 694. The active-site Proton donor is histidine 723. A Zn(2+)-binding site is contributed by cysteine 755.

It belongs to the vitamin-B12 independent methionine synthase family. The cofactor is Zn(2+).

The enzyme catalyses 5-methyltetrahydropteroyltri-L-glutamate + L-homocysteine = tetrahydropteroyltri-L-glutamate + L-methionine. The protein operates within amino-acid biosynthesis; L-methionine biosynthesis via de novo pathway; L-methionine from L-homocysteine (MetE route): step 1/1. In terms of biological role, catalyzes the transfer of a methyl group from 5-methyltetrahydrofolate to homocysteine resulting in methionine formation. The polypeptide is 5-methyltetrahydropteroyltriglutamate--homocysteine methyltransferase (Nitratidesulfovibrio vulgaris (strain ATCC 29579 / DSM 644 / CCUG 34227 / NCIMB 8303 / VKM B-1760 / Hildenborough) (Desulfovibrio vulgaris)).